A 383-amino-acid polypeptide reads, in one-letter code: Sphingosine kinase 1 (383 aa).

One can recognise a DAGKc domain in the interval 12–159 (PRPCRVLVLL…MNLLSLHTAS (148 aa)). ATP is bound by residues 22–24 (NPR) and 54–58 (TERQN). 79 to 82 (SGDG) serves as a coordination point for substrate. The Proton donor/acceptor role is filled by D81. ATP is bound by residues E86 and 111–113 (GSG). Short sequence motifs (nuclear export signal) lie at residues 147 to 155 (LSPMNLLSL) and 161 to 169 (RQLYSVLSL). Position 178 (D178) interacts with substrate. The ATP site is built by R185 and R191. Position 193 is a phosphothreonine (T193). S225 carries the post-translational modification Phosphoserine. 340–342 (DGE) contributes to the ATP binding site. The segment at 363-383 (GSSDSPSGRDSQRRPPPEEPI) is disordered. Positions 372 to 383 (DSQRRPPPEEPI) are enriched in basic and acidic residues.

As to quaternary structure, interacts with ACY1. Binds to calmodulin. Interacts with SPHKAP. Interacts with CIB1, the interaction occurs in a calcium-dependent manner. Interacts with TRAF2. Interacts with EEF1A1; the interaction enhances SPHK1 kinase activity. Mg(2+) serves as cofactor. Expressed in microglia (at protein level).

Its subcellular location is the cytoplasm. The protein localises to the nucleus. The protein resides in the cell membrane. It localises to the endosome membrane. It is found in the membrane. Its subcellular location is the clathrin-coated pit. The protein localises to the synapse. The enzyme catalyses a sphingoid base + ATP = a sphingoid 1-phosphate + ADP + H(+). It catalyses the reaction L-seryl-[protein] + acetyl-CoA = O-acetyl-L-seryl-[protein] + CoA. It carries out the reaction sphinganine + ATP = sphinganine 1-phosphate + ADP + H(+). The catalysed reaction is sphing-4-enine + ATP = sphing-4-enine 1-phosphate + ADP + H(+). The enzyme catalyses 1-O-hexadecyl-2-amino-sn-glycerol + ATP = 1-O-hexadecyl-2-desoxy-2-amino-sn-glycero-3-phosphate + ADP + H(+). Acetyltransferase activity increases in presence of the kinase substrate, sphingosine. In Purkinje cells, kinase activity on sphingosine increases in presence of VEGFA. In neurons, kinase activity increases during the first 24h in presence of Amyloid-beta protein 42 to decrease after 96h. Its function is as follows. Catalyzes the phosphorylation of sphingosine to form sphingosine 1-phosphate (SPP), a lipid mediator with both intra- and extracellular functions. Also acts on D-erythro-sphingosine and to a lesser extent sphinganine, but not other lipids, such as D,L-threo-dihydrosphingosine, N,N-dimethylsphingosine, diacylglycerol, ceramide, or phosphatidylinositol. In contrast to proapoptotic SPHK2, has a negative effect on intracellular ceramide levels, enhances cell growth and inhibits apoptosis. Involved in the regulation of inflammatory response and neuroinflammation. Via the product sphingosine 1-phosphate, stimulates TRAF2 E3 ubiquitin ligase activity, and promotes activation of NF-kappa-B in response to TNF signaling leading to IL17 secretion. In response to TNF and in parallel to NF-kappa-B activation, negatively regulates RANTES induction through p38 MAPK signaling pathway. Involved in endocytic membrane trafficking induced by sphingosine, recruited to dilate endosomes, also plays a role on later stages of endosomal maturation and membrane fusion independently of its kinase activity. In Purkinje cells, seems to be also involved in the regulation of autophagosome-lysosome fusion upon VEGFA. In terms of biological role, has serine acetyltransferase activity on PTGS2/COX2 in an acetyl-CoA dependent manner. The acetyltransferase activity increases in presence of the kinase substrate, sphingosine. During neuroinflammation, through PTGS2 acetylation, promotes neuronal secretion of specialized preresolving mediators (SPMs), especially 15-R-lipoxin A4, which results in an increase of phagocytic microglia. This is Sphingosine kinase 1 (Sphk1) from Rattus norvegicus (Rat).